The following is a 111-amino-acid chain: Nucleoid-associated protein Tmel_0542 (111 aa).

It belongs to the YbaB/EbfC family. Homodimer.

It is found in the cytoplasm. Its subcellular location is the nucleoid. In terms of biological role, binds to DNA and alters its conformation. May be involved in regulation of gene expression, nucleoid organization and DNA protection. In Thermosipho melanesiensis (strain DSM 12029 / CIP 104789 / BI429), this protein is Nucleoid-associated protein Tmel_0542.